We begin with the raw amino-acid sequence, 181 residues long: Endoribonuclease YbeY (181 aa).

The Zn(2+) site is built by H115, H119, and H125.

The protein belongs to the endoribonuclease YbeY family. Requires Zn(2+) as cofactor.

It is found in the cytoplasm. In terms of biological role, single strand-specific metallo-endoribonuclease involved in late-stage 70S ribosome quality control and in maturation of the 3' terminus of the 16S rRNA. The protein is Endoribonuclease YbeY of Bifidobacterium animalis subsp. lactis (strain AD011).